The following is a 459-amino-acid chain: Argininosuccinate lyase (459 aa).

Belongs to the lyase 1 family. Argininosuccinate lyase subfamily.

Its subcellular location is the cytoplasm. The catalysed reaction is 2-(N(omega)-L-arginino)succinate = fumarate + L-arginine. Its pathway is amino-acid biosynthesis; L-arginine biosynthesis; L-arginine from L-ornithine and carbamoyl phosphate: step 3/3. The protein is Argininosuccinate lyase of Bacillus licheniformis (strain ATCC 14580 / DSM 13 / JCM 2505 / CCUG 7422 / NBRC 12200 / NCIMB 9375 / NCTC 10341 / NRRL NRS-1264 / Gibson 46).